We begin with the raw amino-acid sequence, 215 residues long: 2-dehydro-3-deoxy-phosphogluconate aldolase (215 aa).

Glutamate 46 (proton acceptor) is an active-site residue. The pyruvate site is built by arginine 50, threonine 74, and lysine 134. Residue lysine 134 is the Schiff-base intermediate with substrate of the active site.

The protein belongs to the KHG/KDPG aldolase family. In terms of assembly, homotrimer.

It catalyses the reaction 2-dehydro-3-deoxy-6-phospho-D-gluconate = D-glyceraldehyde 3-phosphate + pyruvate. It participates in carbohydrate acid metabolism; 2-dehydro-3-deoxy-D-gluconate degradation; D-glyceraldehyde 3-phosphate and pyruvate from 2-dehydro-3-deoxy-D-gluconate: step 2/2. Involved in the degradation of glucose via the Entner-Doudoroff pathway. Catalyzes the reversible, stereospecific retro-aldol cleavage of 2-keto-3-deoxy-6-phosphogluconate (KDPG) to pyruvate and D-glyceraldehyde-3-phosphate. Involved in the degradation of 3,6-anhydro-L-galactose (L-AnG), which is the major monomeric sugar of red macroalgae. The cleavage of KDPG to glyceraldehyde 3-phosphate and pyruvate is the sixth step of this pathway. This is 2-dehydro-3-deoxy-phosphogluconate aldolase from Pseudoalteromonas atlantica (strain T6c / ATCC BAA-1087).